Here is a 418-residue protein sequence, read N- to C-terminus: MQLYALGLNHHTAPLTIREQVAFQPERLDDALHDLTHERTVREAAILSTCNRTELYFATEQPQHAADWLARFHHMPLSEVSPYLYTYPQRDAIRHVFRVASGLDSMVLGEPQILGQVKDAVRRAEEAGTMGTLLHKLFQNTFAVAKEVRSTTAIGANIVSMAAAALHLSERIFERMSDQRVLFIGAGEMIELCAAYFAGACPKRIAVANRTEARAQLVAHRFGAEVMRLDVVGEMLPHFDVVVSCTASPLPIVGLGMVERAIKARRHRPIVMVDLAVPRDIEAEVGELDDVFLYTVDDLAQIVDAGLESRQQAVLEAEEIIDSRVNGFLHWMQARDAVPTIRALRQHAETVRAVELERATRLLAKGEDPRKVLDALSHGLINKLMHSPTRYLNQSEGEQQADASRLVQQLFNLSNSPD.

Substrate is bound by residues 49 to 52 (TCNR), Ser-105, 110 to 112 (EPQ), and Gln-116. Residue Cys-50 is the Nucleophile of the active site. 185-190 (GAGEMI) contacts NADP(+).

The protein belongs to the glutamyl-tRNA reductase family. As to quaternary structure, homodimer.

It catalyses the reaction (S)-4-amino-5-oxopentanoate + tRNA(Glu) + NADP(+) = L-glutamyl-tRNA(Glu) + NADPH + H(+). It functions in the pathway porphyrin-containing compound metabolism; protoporphyrin-IX biosynthesis; 5-aminolevulinate from L-glutamyl-tRNA(Glu): step 1/2. Catalyzes the NADPH-dependent reduction of glutamyl-tRNA(Glu) to glutamate 1-semialdehyde (GSA). In Aromatoleum aromaticum (strain DSM 19018 / LMG 30748 / EbN1) (Azoarcus sp. (strain EbN1)), this protein is Glutamyl-tRNA reductase.